The following is a 405-amino-acid chain: Probable tRNA sulfurtransferase (405 aa).

The region spanning 60-165 (EPVNDRLKVV…QDGAYISNQL (106 aa)) is the THUMP domain. Residues 183–184 (ML), 208–209 (HF), arginine 265, glycine 287, and glutamine 296 each bind ATP.

This sequence belongs to the ThiI family.

The protein resides in the cytoplasm. The catalysed reaction is [ThiI sulfur-carrier protein]-S-sulfanyl-L-cysteine + a uridine in tRNA + 2 reduced [2Fe-2S]-[ferredoxin] + ATP + H(+) = [ThiI sulfur-carrier protein]-L-cysteine + a 4-thiouridine in tRNA + 2 oxidized [2Fe-2S]-[ferredoxin] + AMP + diphosphate. It carries out the reaction [ThiS sulfur-carrier protein]-C-terminal Gly-Gly-AMP + S-sulfanyl-L-cysteinyl-[cysteine desulfurase] + AH2 = [ThiS sulfur-carrier protein]-C-terminal-Gly-aminoethanethioate + L-cysteinyl-[cysteine desulfurase] + A + AMP + 2 H(+). The protein operates within cofactor biosynthesis; thiamine diphosphate biosynthesis. Its function is as follows. Catalyzes the ATP-dependent transfer of a sulfur to tRNA to produce 4-thiouridine in position 8 of tRNAs, which functions as a near-UV photosensor. Also catalyzes the transfer of sulfur to the sulfur carrier protein ThiS, forming ThiS-thiocarboxylate. This is a step in the synthesis of thiazole, in the thiamine biosynthesis pathway. The sulfur is donated as persulfide by IscS. The protein is Probable tRNA sulfurtransferase of Lactobacillus delbrueckii subsp. bulgaricus (strain ATCC BAA-365 / Lb-18).